We begin with the raw amino-acid sequence, 628 residues long: Keratin, type II cytoskeletal 3 (628 aa).

The tract at residues 1-21 is disordered; sequence MSRQASKTSGGGSQGFSGRSA. A head region spans residues 1-197; the sequence is MSRQASKTSG…DPQIGQVKAQ (197 aa). Residues S13 and S56 each carry the phosphoserine modification. The interval 198 to 233 is coil 1A; it reads EREQIKTLNNKFASFIDKVRFLEQQNKVLETKWNLL. The IF rod domain maps to 198–513; the sequence is EREQIKTLNN…KLLEGEEYRM (316 aa). Positions 234 to 254 are linker 1; the sequence is QQQGTSSISGTNNLEPLFENH. Positions 255 to 346 are coil 1B; that stretch reads INYLRSYLDN…TLYDAELSQM (92 aa). The residue at position 296 (K296) is an N6,N6-dimethyllysine. The interval 347–370 is linker 12; sequence QSHISDTSVVLSMDNNRSLDLDSI. S364 carries the post-translational modification Phosphoserine. The interval 371–509 is coil 2; it reads IAEVRAQYED…ATYRKLLEGE (139 aa). The tract at residues 510–628 is tail; the sequence is EYRMSGECPS…SSQSSQRYSR (119 aa). The interval 605-628 is disordered; the sequence is SSASNRGGSIKFSQSSQSSQRYSR. The segment covering 617–628 has biased composition (low complexity); that stretch reads SQSSQSSQRYSR.

The protein belongs to the intermediate filament family. Heterotetramer of two type I and two type II keratins. Keratin-3 associates with keratin-12. As to expression, cornea specific.

This is Keratin, type II cytoskeletal 3 (KRT3) from Homo sapiens (Human).